A 708-amino-acid polypeptide reads, in one-letter code: Solute carrier family 15 member 1 (708 aa).

Residues 1–21 traverse the membrane as a helical segment; it reads MGMSKSYGCFGYPLSIFFIVV. Residues 22-53 are Extracellular-facing; it reads NEFCERFSYYGMRALLILYFRRFIGWDDNLST. N-linked (GlcNAc...) asparagine glycosylation occurs at N50. The chain crosses the membrane as a helical span at residues 54-74; it reads AIYHTFVALCYLTPILGALIA. Residues 75-82 are Cytoplasmic-facing; the sequence is DSWLGKFK. The chain crosses the membrane as a helical span at residues 83–103; that stretch reads TIVSLSIVYTIGQAVTAVSSI. The Extracellular portion of the chain corresponds to 104–118; it reads NDLTDYNKDGTPDNL. The N-linked (GlcNAc...) asparagine glycan is linked to N117. The helical transmembrane segment at 119–139 threads the bilayer; it reads SVHVALSMIGLALIALGTGGI. At 140–161 the chain is on the cytoplasmic side; that stretch reads KPCVSAFGGDQFEEGQEKQRNR. A helical membrane pass occupies residues 162–182; sequence FFSIFYLAINAGSLISTIVTP. Residues 183–198 are Extracellular-facing; sequence MLRVHECGIYSQKACY. The chain crosses the membrane as a helical span at residues 199-219; that stretch reads PLAFGVPAALMAVSLIVFVIG. Residues 220–276 lie on the Cytoplasmic side of the membrane; sequence SGMYKKFQPQGNVMGKVVKCIGFALKNRFRHRSKQFPKREHWLDWAKEKYDERLISQ. Residues 277–297 traverse the membrane as a helical segment; it reads IKMVTKVMFLYIPLPMFWALF. Over 298–327 the chain is Extracellular; sequence DQQGSRWTLQATAMSGKIGLLEVQPDQMQT. Residues 328 to 348 form a helical membrane-spanning segment; sequence VNAILIVVMVPIMDAVVYPLI. Residues 349-361 lie on the Cytoplasmic side of the membrane; it reads AKCGFNFTSLKRM. The helical transmembrane segment at 362–382 threads the bilayer; sequence TVGMFLASMAFVMAAIVQLEI. Residues 383-584 lie on the Extracellular side of the membrane; sequence DKTLPVFPKQ…ISPNTVNMAL (202 aa). An extracellular domain (ECD) region spans residues 383–585; sequence DKTLPVFPKQ…SPNTVNMALQ (203 aa). N-linked (GlcNAc...) asparagine glycans are attached at residues N408, N439, N495, N499, N509, N514, N527, and N539. A helical transmembrane segment spans residues 585 to 605; it reads QIPQYFLITCGEVVFSVTGLE. At 606-619 the chain is on the cytoplasmic side; the sequence is FSYSQAPSNMKSVL. The helical transmembrane segment at 620–640 threads the bilayer; that stretch reads QAGWLLTVAVGNIIVLIVAGA. Residues 641 to 645 are Extracellular-facing; the sequence is GQFSE. Residues 646–666 form a helical membrane-spanning segment; it reads QWAEYILFAALLLVVCVIFAI. The Cytoplasmic segment spans residues 667–708; the sequence is MARFYTYVNPAEIEAQFDDDEKKNLEKMNVYSTVTPVSQTQM.

This sequence belongs to the major facilitator superfamily. Proton-dependent oligopeptide transporter (POT/PTR) (TC 2.A.17) family. As to quaternary structure, interacts (via extracellular domain region) with trypsin.

It localises to the apical cell membrane. The enzyme catalyses a dipeptide(out) + H(+)(out) = a dipeptide(in) + H(+)(in). It carries out the reaction an L-amino acid tripeptide(out) + H(+)(out) = an L-amino acid tripeptide(in) + H(+)(in). It catalyses the reaction L-alanyl-L-lysine(out) + H(+)(out) = L-alanyl-L-lysine(in) + H(+)(in). The catalysed reaction is L-alanyl-L-proline(out) + H(+)(out) = L-alanyl-L-proline(in) + H(+)(in). The enzyme catalyses L-alanyl-L-valine(out) + H(+)(out) = L-alanyl-L-valine(in) + H(+)(in). It carries out the reaction carnosine(out) + H(+)(out) = carnosine(in) + H(+)(in). It catalyses the reaction glycyl-L-glutamine(out) + H(+)(out) = glycyl-L-glutamine(in) + H(+)(in). The catalysed reaction is glycyl-L-leucine(out) + H(+)(out) = glycyl-L-leucine(in) + H(+)(in). The enzyme catalyses glycyl-L-proline(out) + H(+)(out) = glycyl-L-proline(in) + H(+)(in). It carries out the reaction glycyl-sarcosine(out) + H(+)(out) = glycyl-sarcosine(in) + H(+)(in). It catalyses the reaction L-leucyl-L-leucine(out) + H(+)(out) = L-leucyl-L-leucine(in) + H(+)(in). The catalysed reaction is L-leucyl-L-proline(out) + H(+)(out) = L-leucyl-L-proline(in) + H(+)(in). The enzyme catalyses L-phenylalanyl-L-leucine(out) + H(+)(out) = L-phenylalanyl-L-leucine(in) + H(+)(in). It carries out the reaction L-phenylalanyl-L-phenylalanine(out) + H(+)(out) = L-phenylalanyl-L-phenylalanine(in) + H(+)(in). It catalyses the reaction L-lysyl-glycine(out) + H(+)(out) = L-lysyl-glycine(in) + H(+)(in). The catalysed reaction is L-tyrosylglycine(out) + H(+)(out) = L-tyrosylglycine(in) + H(+)(in). The enzyme catalyses L-alanyl-L-aspartate(out) + 2 H(+)(out) = L-alanyl-L-aspartate(in) + 2 H(+)(in). It carries out the reaction L-aspartyl-glycine(out) + 2 H(+)(out) = L-aspartyl-glycine(in) + 2 H(+)(in). It catalyses the reaction glycyl-L-aspartate(out) + 2 H(+)(out) = glycyl-L-aspartate(in) + 2 H(+)(in). The catalysed reaction is glycyl-L-glutamate(out) + 2 H(+)(out) = glycyl-L-glutamate(in) + 2 H(+)(in). The enzyme catalyses L-alanyl-L-leucyl-L-alanine(out) + H(+)(out) = L-alanyl-L-leucyl-L-alanine(in) + H(+)(in). It carries out the reaction L-alanyl-L-prolylglycine(out) + H(+)(out) = L-alanyl-L-prolylglycine(in) + H(+)(in). It catalyses the reaction glycylglycyl-L-isoleucine(out) + H(+)(out) = glycylglycyl-L-isoleucine(in) + H(+)(in). The catalysed reaction is glycylglycyl-L-proline(out) + H(+)(out) = glycylglycyl-L-proline(in) + H(+)(in). The enzyme catalyses L-methionyl-L-phenylalanyl-L-methionine(out) + H(+)(out) = L-methionyl-L-phenylalanyl-L-methionine(in) + H(+)(in). It carries out the reaction N-acetyl-D-muramoyl-L-alanyl-D-isoglutamine(out) + 2 H(+)(out) = N-acetyl-D-muramoyl-L-alanyl-D-isoglutamine(in) + 2 H(+)(in). It catalyses the reaction N(alpha)-formyl-L-methionyl-L-leucyl-L-phenylalanine(out) + 2 H(+)(out) = N(alpha)-formyl-L-methionyl-L-leucyl-L-phenylalanine(in) + 2 H(+)(in). Functionally, electrogenic proton-coupled amino-acid transporter that transports oligopeptides of 2 to 4 amino acids with a preference for dipeptides. Transports neutral and monovalently charged peptides with a proton to peptide stoichiometry of 1:1 or 2:1. Primarily responsible for the absorption of dietary di- and tripeptides from the small intestinal lumen. Mediates transepithelial transport of muramyl and N-formylated bacterial dipeptides contributing to recognition of pathogenic bacteria by the mucosal immune system. The polypeptide is Solute carrier family 15 member 1 (SLC15A1) (Canis lupus familiaris (Dog)).